The sequence spans 1081 residues: uncharacterized protein (1081 aa).

Coiled coils occupy residues 18–131 (AIEE…FEEN) and 173–242 (NHDE…NDDK). Positions 22-53 (NNKNREIQEKRQKETKDRNDRMVQNQKDRKEM) are enriched in basic and acidic residues. The interval 22–60 (NNKNREIQEKRQKETKDRNDRMVQNQKDRKEMIGLTNEK) is disordered. 2 disordered regions span residues 250-321 (TDDE…KPGI) and 388-1081 (QEPK…GNDE). A compositionally biased stretch (pro residues) spans 267–283 (TPTPTPTPTPTPTPTPT). 2 stretches are compositionally biased toward low complexity: residues 284–313 (PTTT…KTST) and 396–410 (NNQS…QAGD). A compositionally biased stretch (basic and acidic residues) spans 411–421 (DQNKNQNRDEN). Low complexity-rich tracts occupy residues 422–568 (NQGG…NNQE), 576–602 (NQDG…GGEN), 614–623 (GENNQDGGEN), 633–644 (DGENNQDGGENN), 662–672 (GENNQDGGENN), and 680–733 (QDGG…NNQD). 3 stretches are compositionally biased toward acidic residues: residues 748–768 (GGED…DNQD), 778–832 (NNQD…DENN), and 840–854 (QDGD…DENN). 2 stretches are compositionally biased toward low complexity: residues 855-869 (NQDG…GENN) and 877-888 (NQDGGENNQDGE). The segment covering 889–954 (NNQDGDENNN…GDENNQDGDE (66 aa)) has biased composition (acidic residues). Composition is skewed to low complexity over residues 955–975 (NNQG…GGDE), 983–1026 (ENNQ…GGDE), and 1034–1081 (GENN…GNDE).

This is an uncharacterized protein from Dictyostelium discoideum (Social amoeba).